A 110-amino-acid chain; its full sequence is Iron-sulfur cluster assembly protein CyaY (110 aa).

This sequence belongs to the frataxin family.

In terms of biological role, involved in iron-sulfur (Fe-S) cluster assembly. May act as a regulator of Fe-S biogenesis. This chain is Iron-sulfur cluster assembly protein CyaY, found in Pseudomonas syringae pv. syringae (strain B728a).